Reading from the N-terminus, the 601-residue chain is MPRQEHIRNFSIIAHIDHGKSTLADRILEVTGLVSDREKRDQYLDRMDLERERGITIKAQTVRIPFTSKTGRKYILNLIDTPGHVDFNYEVSRSLAACDGALLVVDASQGVEAQTLANVYLALDHDHDIIPVLNKIDLPSSDVDRVKAEIEESIGLDCTDAIAVSAKTGMNVDKVLEAIVERLPAPEGNLNAPLKALIFDSWYDSYQGVVVLFRVMDGVLRKGDRVRMFATEKSYEVIRLGVFSPDIVDVAELGAGEVGFLCANIKELGDAKVGDTITHTDRPASEPVPGFKEVQPMVFCGLYPTDAAEYEPLKASLEKLQLNDAAFSYEPETSQALGFGFRCGFLGLLHMEIIQERLEREFQVDLIATAPSVIYKVETVDGKTQDIDNPSKLPDPTRITSLYEPYVRMDIHVPNEFVGNVLKLCEEKRGIQKNMGYIAANRVVITYELPFAEIVFDFFDRLKSGTKGYASMDYEPVDYRESSLVRLDILINGEAVDALAVIVHRDKAYHYGRALALKLKRTIPRQLFEVAIQAAIGQKVIARETISAMRKNVTAKCYGGDITRKRKLLEKQKEGKRRMKRMGNVELPQEAFLAALQVGDE.

The 183-residue stretch at 5–187 (EHIRNFSIIA…AIVERLPAPE (183 aa)) folds into the tr-type G domain. Residues 17–22 (DHGKST) and 134–137 (NKID) each bind GTP.

Belongs to the TRAFAC class translation factor GTPase superfamily. Classic translation factor GTPase family. LepA subfamily.

The protein localises to the cell inner membrane. The catalysed reaction is GTP + H2O = GDP + phosphate + H(+). Functionally, required for accurate and efficient protein synthesis under certain stress conditions. May act as a fidelity factor of the translation reaction, by catalyzing a one-codon backward translocation of tRNAs on improperly translocated ribosomes. Back-translocation proceeds from a post-translocation (POST) complex to a pre-translocation (PRE) complex, thus giving elongation factor G a second chance to translocate the tRNAs correctly. Binds to ribosomes in a GTP-dependent manner. This is Elongation factor 4 from Nitratidesulfovibrio vulgaris (strain ATCC 29579 / DSM 644 / CCUG 34227 / NCIMB 8303 / VKM B-1760 / Hildenborough) (Desulfovibrio vulgaris).